Consider the following 733-residue polypeptide: Hypermethylated in cancer 1 protein (733 aa).

The 64-residue stretch at 47-110 (CDVIIVVQNA…IYTGRLTDSV (64 aa)) folds into the BTB domain. The interval 154–315 (KYCHLRGGGS…PFRGSGGSPG (162 aa)) is mediates HDAC-dependent transcriptional repression. Residue R159 is modified to Omega-N-methylarginine. The segment at 189–209 (YSSPAGPPPPPAAEPPSGPDA) is disordered. The segment covering 193-206 (AGPPPPPAAEPPSG) has biased composition (pro residues). S237 is modified (phosphoserine). The interval 241–247 (GLDLSKK) is interaction with CTBP1. The tract at residues 241–421 (GLDLSKKSPP…PGGHLEGYPC (181 aa)) is disordered. S248 carries the phosphoserine modification. N6-acetyllysine; alternate is present on K333. K333 is covalently cross-linked (Glycyl lysine isopeptide (Lys-Gly) (interchain with G-Cter in SUMO); alternate). Basic and acidic residues predominate over residues 344 to 361 (ELVRDRGSPGERLEERGG). S366 bears the Phosphoserine mark. A compositionally biased stretch (pro residues) spans 368 to 380 (GGPPLGLVPPPRY). C2H2-type zinc fingers lie at residues 437–464 (YVCI…EEEE), 507–534 (YRCA…LTRP), 535–562 (YPCT…GLKP), 563–590 (FACD…GEKP), and 591–618 (YECQ…VGGA). The residue at position 704 (S704) is a Phosphoserine.

Belongs to the krueppel C2H2-type zinc-finger protein family. Hic subfamily. Self-associates. Interacts with HIC2. Interacts with CTBP1 and CTBP2. Interacts with TCF7L2 and ARID1A. Interacts with MTA1 and MBD3; indicative for an association with the NuRD complex. Interacts with SIRT1. In terms of processing, acetylated on several residues, including Lys-333. Lys-333 is deacetylated by SIRT1. Post-translationally, sumoylated on Lys-333 by a PIAS family member, which enhances interaction with MTA1, positively regulates transcriptional repression activity and is enhanced by HDAC4. As to expression, ubiquitously expressed with highest levels in heart and lung.

The protein localises to the nucleus. In terms of biological role, transcriptional repressor. Recognizes and binds to the consensus sequence '5-[CG]NG[CG]GGGCA[CA]CC-3'. May act as a tumor suppressor. Involved in development of head, face, limbs and ventral body wall. Involved in down-regulation of SIRT1 and thereby is involved in regulation of p53/TP53-dependent apoptotic DNA-damage responses. The specific target gene promoter association seems to be depend on corepressors, such as CTBP1 or CTBP2 and MTA1. In cooperation with MTA1 (indicative for an association with the NuRD complex) represses transcription from CCND1/cyclin-D1 and CDKN1C/p57Kip2 specifically in quiescent cells. Involved in regulation of the Wnt signaling pathway probably by association with TCF7L2 and preventing TCF7L2 and CTNNB1 association with promoters of TCF-responsive genes. Seems to repress transcription from E2F1 and ATOH1 which involves ARID1A, indicative for the participation of a distinct SWI/SNF-type chromatin-remodeling complex. Probably represses transcription from ACKR3, FGFBP1 and EFNA1. In Mus musculus (Mouse), this protein is Hypermethylated in cancer 1 protein (Hic1).